A 447-amino-acid chain; its full sequence is MDRMFGTDGVRGIANTELTAQIAYNLGRAGAYVLTEGAHKPKILVAKDTRISGDMLESALVAGILSVGAEAVILGVVPTPAVAYLTREYNADAGVMISASHNPVEYNGIKFFNNKGYKLSDELEDGIQKVIESDFEGVPSPIGIDLGRERIEVAALEDYTEFAKQTIPYNLKGMKIALDCANGASYKSAVKAFRDLGADVFVINDNPDGTNINKNCGSTHPEELMDYVVKKGCDLGFAFDGDADRCLAVDENGKLINGDFILMLCANYLKEIGKLKDDTLVVTVMSNLGLDIACRGFGIKLEKTKVGDRYVLEEMTKDNYVLGGEQSGHVIFLDYNTTGDGLVTALQVASIVKKKEKTLSELCSVMKELPQVLVNATVPNDKKNIYLEDTEIVEAIKEIEAKLNGVGRVLIRPSGTEPLVRVMLEGENQAEIDEMAHGLANLILSKI.

The active-site Phosphoserine intermediate is S100. Residues S100, D240, D242, and D244 each contribute to the Mg(2+) site. S100 carries the post-translational modification Phosphoserine.

It belongs to the phosphohexose mutase family. Mg(2+) is required as a cofactor. Post-translationally, activated by phosphorylation.

It catalyses the reaction alpha-D-glucosamine 1-phosphate = D-glucosamine 6-phosphate. Its function is as follows. Catalyzes the conversion of glucosamine-6-phosphate to glucosamine-1-phosphate. In Clostridium botulinum (strain Eklund 17B / Type B), this protein is Phosphoglucosamine mutase.